The primary structure comprises 558 residues: Potassium-transporting ATPase potassium-binding subunit (558 aa).

12 helical membrane passes run Leu2 to Leu22, Val66 to Phe86, Ala135 to Ile155, Ile177 to Thr197, Leu253 to Met273, Gly280 to Val300, Phe327 to Val347, Leu354 to Gly374, Gly378 to Gly398, Ile413 to Ile433, Leu482 to Leu502, and Gly528 to Leu548.

This sequence belongs to the KdpA family. The system is composed of three essential subunits: KdpA, KdpB and KdpC.

It localises to the cell inner membrane. Functionally, part of the high-affinity ATP-driven potassium transport (or Kdp) system, which catalyzes the hydrolysis of ATP coupled with the electrogenic transport of potassium into the cytoplasm. This subunit binds the periplasmic potassium ions and delivers the ions to the membrane domain of KdpB through an intramembrane tunnel. The polypeptide is Potassium-transporting ATPase potassium-binding subunit (Synechocystis sp. (strain ATCC 27184 / PCC 6803 / Kazusa)).